Here is a 112-residue protein sequence, read N- to C-terminus: Large ribosomal subunit protein bL17 (112 aa).

Belongs to the bacterial ribosomal protein bL17 family. In terms of assembly, part of the 50S ribosomal subunit. Contacts protein L32.

This chain is Large ribosomal subunit protein bL17, found in Desulfitobacterium hafniense (strain DSM 10664 / DCB-2).